The chain runs to 247 residues: MSFKKAQSHFFLKNPERVRSLQKLSKKIGIKFSKVEYYNTAFIHSSYKNENQEILEDNERLEFLGDSVLGLVAARSLFRKYPKANEGELSRIKSRIVSTPILNSISEKLELSEYLLLGKGEKNSLGKGRRKLSANLFESLVGAIYLDQGFEIAEKFILRHLSEFVENPEKEESVRDYKTQLQEYSQKHFKILPIYRTKSESGPDHAKTFQVVVRIRDQWEASGSGVSKKSAEQNAAKELYNRIRKKT.

The region spanning 21 to 149 (LQKLSKKIGI…LVGAIYLDQG (129 aa)) is the RNase III domain. E62 is a Mg(2+) binding site. D66 is a catalytic residue. 2 residues coordinate Mg(2+): N135 and E138. E138 is a catalytic residue. Positions 176–245 (DYKTQLQEYS…AKELYNRIRK (70 aa)) constitute a DRBM domain.

The protein belongs to the ribonuclease III family. In terms of assembly, homodimer. It depends on Mg(2+) as a cofactor.

It is found in the cytoplasm. It carries out the reaction Endonucleolytic cleavage to 5'-phosphomonoester.. Its function is as follows. Digests double-stranded RNA. Involved in the processing of primary rRNA transcript to yield the immediate precursors to the large and small rRNAs (23S and 16S). Processes some mRNAs, and tRNAs when they are encoded in the rRNA operon. Processes pre-crRNA and tracrRNA of type II CRISPR loci if present in the organism. The polypeptide is Ribonuclease 3 (Leptospira interrogans serogroup Icterohaemorrhagiae serovar copenhageni (strain Fiocruz L1-130)).